A 568-amino-acid polypeptide reads, in one-letter code: MFS-type efflux transporter phmH (568 aa).

Over residues 1–11 (MVSGTDTTEVG) the composition is skewed to polar residues. A disordered region spans residues 1–39 (MVSGTDTTEVGATTKAPPSEGTEGILDDHSSNSQPQAEK). Helical transmembrane passes span 45–65 (YPLS…VSAL), 101–121 (YVMI…GGSS), 134–154 (GIGA…LVPM), 161–181 (IGLL…VGGI), 199–219 (IFYI…LFLH), 237–257 (VIGN…LTYG), and 268–288 (IAAP…WEMS). N-linked (GlcNAc...) asparagine glycosylation occurs at Asn-303. Transmembrane regions (helical) follow at residues 307–327 (AAAF…NFFY), 344–364 (VYTL…GAIV), 372–392 (TVHL…SILD), 399–419 (EWVI…STTL), 437–457 (TWSF…AAIF), and 515–535 (IGIV…EIHL). The N-linked (GlcNAc...) asparagine glycan is linked to Asn-563.

This sequence belongs to the major facilitator superfamily.

It localises to the cell membrane. MFS-type efflux transporter; part of the gene cluster that mediates the biosynthesis of thethe mycotoxins phomacins, leucine-derived cytochalasans with potent actin polymerization-inhibitory activities and monocot-specific antigerminative activities. PhmH might be involved in the excretion of phomacins. The protein is MFS-type efflux transporter phmH of Phaeosphaeria nodorum (strain SN15 / ATCC MYA-4574 / FGSC 10173) (Glume blotch fungus).